We begin with the raw amino-acid sequence, 115 residues long: Ribonuclease P protein component (115 aa).

This sequence belongs to the RnpA family. In terms of assembly, consists of a catalytic RNA component (M1 or rnpB) and a protein subunit.

The catalysed reaction is Endonucleolytic cleavage of RNA, removing 5'-extranucleotides from tRNA precursor.. RNaseP catalyzes the removal of the 5'-leader sequence from pre-tRNA to produce the mature 5'-terminus. It can also cleave other RNA substrates such as 4.5S RNA. The protein component plays an auxiliary but essential role in vivo by binding to the 5'-leader sequence and broadening the substrate specificity of the ribozyme. The protein is Ribonuclease P protein component of Blochmanniella pennsylvanica (strain BPEN).